Consider the following 345-residue polypeptide: MLKIAVDAMGGDFAPEVNILGAYEVVQDIEVEIILVGDEKKIKSFLPEKKETKGIISVIPADDVIQMDENISSALRRKNTSMRKAVELVKAGKADAVISAGHSGAMMALSFLLLGKLPNVERPAIATVMPCLKGHFILLDAGANVDCKPEHLVQFAFMGEAYHKALFNSQSPKIALLSIGEEGSKGNELTKEAFKLLKSSRLNFVGNIEGKDIFFGQADVVVCDGFVGNIVLKVGEGLAEALMKMLKREIADIITGKLGYMMIKPAIKSFRKKVDYSEYGGALLLGINGTSIICHGRSSAKAIKNAIKVATEMVKKQIYTRISESLNQTEERDESQNSVNRLLCS.

Belongs to the PlsX family. In terms of assembly, homodimer. Probably interacts with PlsY.

The protein resides in the cytoplasm. It catalyses the reaction a fatty acyl-[ACP] + phosphate = an acyl phosphate + holo-[ACP]. The protein operates within lipid metabolism; phospholipid metabolism. Catalyzes the reversible formation of acyl-phosphate (acyl-PO(4)) from acyl-[acyl-carrier-protein] (acyl-ACP). This enzyme utilizes acyl-ACP as fatty acyl donor, but not acyl-CoA. The polypeptide is Phosphate acyltransferase (Thermodesulfovibrio yellowstonii (strain ATCC 51303 / DSM 11347 / YP87)).